The chain runs to 341 residues: Protein DOWNY MILDEW RESISTANCE 6 (341 aa).

A Fe2OG dioxygenase domain is found at Q188 to P288. The Fe cation site is built by H212, D214, and H269. R279 lines the 2-oxoglutarate pocket.

This sequence belongs to the iron/ascorbate-dependent oxidoreductase family. It depends on Fe(2+) as a cofactor.

The enzyme catalyses salicylate + NADH + O2 + H(+) = 2,3-dihydroxybenzoate + NAD(+) + H2O. In terms of biological role, converts salicylic acid (SA) to 2,3-dihydroxybenzoic acid (2,3-DHBA). Suppressor of immunity. Regulates negatively defense associated genes expression (e.g. PR-1, PR-2, and PR-5). Negative regulator of defense against Hyaloperonospora arabidopsidis. (Microbial infection) Required for susceptibility to the downy mildew pathogen Hyaloperonospora arabidopsidis. Its function is as follows. (Microbial infection) Required for susceptibility to Pseudomonas syringae pv. tomato DC3000. Functionally, (Microbial infection) Required for susceptibility to the oomycete Phytophthora capsici. This is Protein DOWNY MILDEW RESISTANCE 6 from Arabidopsis thaliana (Mouse-ear cress).